Consider the following 439-residue polypeptide: Protein disulfide-isomerase A6 (439 aa).

Positions methionine 1–glycine 19 are cleaved as a signal peptide. Thioredoxin domains are found at residues leucine 20–glutamine 133 and glutamine 151–alanine 287. Residues cysteine 55 and cysteine 58 each act as nucleophile in the active site. Cysteines 55 and 58 form a disulfide. Residues serine 129, serine 156, and serine 158 each carry the phosphoserine modification. Residues glycine 141 to lysine 160 form a disordered region. Active-site nucleophile residues include cysteine 190 and cysteine 193. Residues cysteine 190 and cysteine 193 are joined by a disulfide bond. A disordered region spans residues glycine 400–aspartate 425. Serine 427 bears the Phosphoserine mark. The short motif at lysine 436–leucine 439 is the Prevents secretion from ER element.

It belongs to the protein disulfide isomerase family. Part of a large chaperone multiprotein complex comprising DNAJB11, HSP90B1, HSPA5, HYOU, PDIA2, PDIA4, PDIA6, PPIB, SDF2L1, UGGT1 and very small amounts of ERP29, but not, or at very low levels, CALR nor CANX. Interacts with MICA on the surface of tumor cells, leading to MICA disulfide bond reduction which is required for its release from tumor cells. Interacts with ITGB3 following platelet stimulation. Interacts with ERN1; the interaction is direct. Interacts with EIF2AK3. In terms of tissue distribution, expressed most abundantly in lung and kidney, followed by heart, liver and brain.

Its subcellular location is the endoplasmic reticulum lumen. It is found in the cell membrane. It localises to the melanosome. The enzyme catalyses Catalyzes the rearrangement of -S-S- bonds in proteins.. Its function is as follows. May function as a chaperone that inhibits aggregation of misfolded proteins. Negatively regulates the unfolded protein response (UPR) through binding to UPR sensors such as ERN1, which in turn inactivates ERN1 signaling. May also regulate the UPR via the EIF2AK3 UPR sensor. Plays a role in platelet aggregation and activation by agonists such as convulxin, collagen and thrombin. In Mesocricetus auratus (Golden hamster), this protein is Protein disulfide-isomerase A6 (PDIA6).